A 127-amino-acid polypeptide reads, in one-letter code: Holo-[acyl-carrier-protein] synthase (127 aa).

Mg(2+) contacts are provided by D9 and E58.

It belongs to the P-Pant transferase superfamily. AcpS family. It depends on Mg(2+) as a cofactor.

Its subcellular location is the cytoplasm. It catalyses the reaction apo-[ACP] + CoA = holo-[ACP] + adenosine 3',5'-bisphosphate + H(+). Functionally, transfers the 4'-phosphopantetheine moiety from coenzyme A to a Ser of acyl-carrier-protein. This is Holo-[acyl-carrier-protein] synthase from Shewanella oneidensis (strain ATCC 700550 / JCM 31522 / CIP 106686 / LMG 19005 / NCIMB 14063 / MR-1).